Consider the following 100-residue polypeptide: Conantokin-G (100 aa).

A signal peptide spans 1–21 (MHLYTYLYLLVPLVTFHLILG). The propeptide occupies 22–80 (TGTLDDGGALTERRSADATALKAEPVLLQKSAARSTDDNGKDRLTQMKRILKQRGNKAR). The disordered stretch occupies residues 52 to 100 (SAARSTDDNGKDRLTQMKRILKQRGNKARGEEELQENQELIREKSNGKR). Residues 56–66 (STDDNGKDRLT) show a composition bias toward basic and acidic residues. Residues 61–80 (GKDRLTQMKRILKQRGNKAR) form a gamma-carboxylation recognition sequence that plays a role in the conversion of Glu to carboxy-Glu (Gla) region. An a divalent metal cation-binding site is contributed by Glu-83. Glu-83, Glu-84, Glu-87, Glu-90, and Glu-94 each carry 4-carboxyglutamate. A divalent metal cation-binding residues include Glu-87, Glu-90, and Glu-94. Residues 90–100 (ELIREKSNGKR) show a composition bias toward basic and acidic residues. An Asparagine amide modification is found at Asn-97.

Belongs to the conotoxin B superfamily. Ca(2+) serves as cofactor. The cofactor is Mg(2+). As to expression, expressed by the venom duct.

The protein localises to the secreted. In terms of biological role, conantokins inhibit N-methyl-D-aspartate (NMDA) receptors. This toxin is selective for the NR2B/GRIN2B subunit. Induces sleep-like symptoms in young mice and hyperactivity in older mice. The protein is Conantokin-G of Conus geographus (Geography cone).